The following is a 360-amino-acid chain: F420-dependent hydroxymycolic acid dehydrogenase (360 aa).

A signal peptide (tat-type signal) is located at residues 1-40 (MTGISRRTFGLAAGFGAIGAGGLGGGCSTRSGPTPTPEPA). Aspartate 77 lines the coenzyme F420-(gamma-Glu)n pocket. Catalysis depends on histidine 78, which acts as the Proton donor. 145–146 (TG) serves as a coordination point for coenzyme F420-(gamma-Glu)n. The Proton acceptor role is filled by glutamate 147. Residues asparagine 150 and 213–214 (SG) each bind coenzyme F420-(gamma-Glu)n.

The protein belongs to the F420-dependent hydroxymycolic acid dehydrogenase family. Homodimer. In terms of processing, is exported by the Tat system. The position of the signal peptide cleavage has not been experimentally proven. May be lipidated.

It localises to the cell envelope. Its pathway is lipid metabolism; mycolic acid biosynthesis. Is inhibited by the anti-tuberculous drug PA-824, a bicyclic 4-nitroimidazole class compound. Therefore, this is consistent with the finding that PA-824 inhibits the formation of K-MAs and causes an accumulation of hydroxymycolic acids (H-MAs) in M.tuberculosis. Functionally, catalyzes the coenzyme F420-dependent oxidation of hydroxymycolic acids (H-MAs) to ketomycolic acids (K-MAs), a lipid class making up the mycobacterial pseudo-outer membrane and over one-third of the dry weight of M.tuberculosis. Does not exhibit F420-dependent glucose-6-phosphate dehydrogenase (FGD) activity. This Mycobacterium tuberculosis (strain ATCC 25618 / H37Rv) protein is F420-dependent hydroxymycolic acid dehydrogenase.